The sequence spans 175 residues: Co-chaperone protein HscB homolog (175 aa).

The J domain occupies 7–79; it reads SHFDLFHLPA…LKRATYLLHL (73 aa).

This sequence belongs to the HscB family. As to quaternary structure, interacts with HscA and stimulates its ATPase activity.

Functionally, co-chaperone involved in the maturation of iron-sulfur cluster-containing proteins. Seems to help targeting proteins to be folded toward HscA. This is Co-chaperone protein HscB homolog from Burkholderia mallei (strain ATCC 23344).